A 358-amino-acid polypeptide reads, in one-letter code: 3-dehydroquinate synthase (358 aa).

NAD(+)-binding positions include 70-75, 104-108, 128-129, lysine 141, and lysine 150; these read DGEAHK, GVIGD, and TT. 3 residues coordinate Zn(2+): glutamate 183, histidine 246, and histidine 263.

This sequence belongs to the sugar phosphate cyclases superfamily. Dehydroquinate synthase family. The cofactor is NAD(+). It depends on Co(2+) as a cofactor. Requires Zn(2+) as cofactor.

The protein localises to the cytoplasm. The catalysed reaction is 7-phospho-2-dehydro-3-deoxy-D-arabino-heptonate = 3-dehydroquinate + phosphate. It participates in metabolic intermediate biosynthesis; chorismate biosynthesis; chorismate from D-erythrose 4-phosphate and phosphoenolpyruvate: step 2/7. Its function is as follows. Catalyzes the conversion of 3-deoxy-D-arabino-heptulosonate 7-phosphate (DAHP) to dehydroquinate (DHQ). The protein is 3-dehydroquinate synthase of Bordetella bronchiseptica (strain ATCC BAA-588 / NCTC 13252 / RB50) (Alcaligenes bronchisepticus).